Consider the following 147-residue polypeptide: DNA-directed RNA polymerase subunit 6 homolog (147 aa).

The protein belongs to the archaeal RpoK/eukaryotic RPB6 RNA polymerase subunit family. Part of the viral DNA-directed RNA polymerase that consists of 8 polII-like subunits (RPB1, RPB2, RPB3, RPB5, RPB6, RPB7, RPB9, RPB10), a capping enzyme and a termination factor.

The protein localises to the host cytoplasm. The protein resides in the virion. Its function is as follows. Component of the DNA-directed RNA polymerase (RNAP) that catalyzes the transcription in the cytoplasm of viral DNA into RNA using the four ribonucleoside triphosphates as substrates. The sequence is that of DNA-directed RNA polymerase subunit 6 homolog from Ornithodoros (relapsing fever ticks).